The following is a 525-amino-acid chain: GMP synthase [glutamine-hydrolyzing] (525 aa).

In terms of domain architecture, Glutamine amidotransferase type-1 spans 9–207 (RILILDFGSQ…VRDICQCEAL (199 aa)). C86 functions as the Nucleophile in the catalytic mechanism. Active-site residues include H181 and E183. Positions 208–400 (WTPAKIIDDA…LGLPYDMLYR (193 aa)) constitute a GMPS ATP-PPase domain. Position 235 to 241 (235 to 241 (SGGVDSS)) interacts with ATP.

In terms of assembly, homodimer.

It catalyses the reaction XMP + L-glutamine + ATP + H2O = GMP + L-glutamate + AMP + diphosphate + 2 H(+). It participates in purine metabolism; GMP biosynthesis; GMP from XMP (L-Gln route): step 1/1. Functionally, catalyzes the synthesis of GMP from XMP. The chain is GMP synthase [glutamine-hydrolyzing] from Salmonella newport (strain SL254).